The primary structure comprises 341 residues: UDP-N-acetylglucosamine--N-acetylmuramyl-(pentapeptide) pyrophosphoryl-undecaprenol N-acetylglucosamine transferase (341 aa).

UDP-N-acetyl-alpha-D-glucosamine is bound by residues 10-12, Asn-124, Ser-177, and Gln-275; that span reads TGG.

This sequence belongs to the glycosyltransferase 28 family. MurG subfamily.

The protein localises to the cell inner membrane. The enzyme catalyses di-trans,octa-cis-undecaprenyl diphospho-N-acetyl-alpha-D-muramoyl-L-alanyl-D-glutamyl-meso-2,6-diaminopimeloyl-D-alanyl-D-alanine + UDP-N-acetyl-alpha-D-glucosamine = di-trans,octa-cis-undecaprenyl diphospho-[N-acetyl-alpha-D-glucosaminyl-(1-&gt;4)]-N-acetyl-alpha-D-muramoyl-L-alanyl-D-glutamyl-meso-2,6-diaminopimeloyl-D-alanyl-D-alanine + UDP + H(+). It functions in the pathway cell wall biogenesis; peptidoglycan biosynthesis. Functionally, cell wall formation. Catalyzes the transfer of a GlcNAc subunit on undecaprenyl-pyrophosphoryl-MurNAc-pentapeptide (lipid intermediate I) to form undecaprenyl-pyrophosphoryl-MurNAc-(pentapeptide)GlcNAc (lipid intermediate II). In Campylobacter hominis (strain ATCC BAA-381 / DSM 21671 / CCUG 45161 / LMG 19568 / NCTC 13146 / CH001A), this protein is UDP-N-acetylglucosamine--N-acetylmuramyl-(pentapeptide) pyrophosphoryl-undecaprenol N-acetylglucosamine transferase.